A 570-amino-acid chain; its full sequence is Keratin, type I cytoskeletal 10 (570 aa).

The span at 1-16 shows a compositional bias: low complexity; the sequence is MSVLYSSSSKQFSSSR. Residues 1–29 form a disordered region; the sequence is MSVLYSSSSKQFSSSRSGGGGGGGSVRVS. Positions 1 to 143 are head; that stretch reads MSVLYSSSSK…GDGGSLLSGN (143 aa). Phosphoserine occurs at positions 15 and 17. R32 carries the post-translational modification Asymmetric dimethylarginine; alternate. R32 is subject to Omega-N-methylarginine; alternate. S34, S45, S48, and S168 each carry phosphoserine. A coil 1A region spans residues 144–179; the sequence is GRVTMQNLNDRLASYMDKVRALEESNYELEGKIKEW. One can recognise an IF rod domain in the interval 144–458; sequence GRVTMQNLND…SLLEGEGSSS (315 aa). The tract at residues 180-200 is linker 1; it reads YEKHGNSSQREPRDYSKYYKT. A coil 1B region spans residues 201–292; that stretch reads IEDLKGQILT…KNHEEEMRDL (92 aa). Residues 293-315 form a linker 12 region; sequence QNVSTGDVNVEMNAAPGVDLTQL. The tract at residues 316–454 is coil 2; that stretch reads LNNMRNQYEQ…QTYRSLLEGE (139 aa). The disordered stretch occupies residues 451–570; it reads LEGEGSSSGG…GDQSSKGPRY (120 aa). The tract at residues 455–570 is tail; it reads GSSSGGGGGR…GDQSSKGPRY (116 aa). Positions 456–562 are enriched in gly residues; the sequence is SSSGGGGGRR…GGFKSSGGGD (107 aa).

It belongs to the intermediate filament family. In terms of assembly, (Microbial infection) Interacts (via C-terminal tail domain) with the S.aureus clumping factor, clfB; this interaction probably mediates S.aureus attachment to the highly keratinized squamous epithelial cells from the nasal cavity. Heterotetramer of two type I and two type II keratins. Heterodimer with KRT1. Two heterodimers of KRT1 and KRT10 form a heterotetramer. The KRT10 subunit in the heterotetramer is probably disulfide-linked. Interacts with PLEC isoform 1C, when in a heterodimer with KRT1. As to quaternary structure, (Microbial infection) Interacts (via the C-terminal tail domain) with S.pneumoniae serine-rich repeat protein PsrP; this interaction probably mediates S.pneumoniae adherence to lung tissue and subsequent pathogenesis. Expressed in the suprabasal layers of the epidermis throughout the entire sole (at protein level). Expressed in the infundibular regions of the ear, the interscale regions of the tail, and the interfollicular epidermis of the back. Expressed in lung tissue from young mice (at protein level).

It localises to the secreted. The protein resides in the extracellular space. Its subcellular location is the cell surface. The protein localises to the cytoplasm. In terms of biological role, plays a role in the establishment of the epidermal barrier on plantar skin. Involved in the maintenance of cell layer development and keratin filament bundles in suprabasal cells of the epithelium. Functionally, (Microbial infection) Acts as a mediator of S.aureus adherence to desquamated nasal epithelial cells via clfB, and hence may play a role in nasal colonization. (Microbial infection) Binds S.pneumoniae PsrP, mediating adherence of the bacteria to lung cell lines. The chain is Keratin, type I cytoskeletal 10 (Krt10) from Mus musculus (Mouse).